Reading from the N-terminus, the 158-residue chain is Putative ribonucleoside-diphosphate reductase small chain B (158 aa).

It belongs to the ribonucleoside diphosphate reductase small chain family.

This is Putative ribonucleoside-diphosphate reductase small chain B (RNR2B) from Arabidopsis thaliana (Mouse-ear cress).